The following is a 163-amino-acid chain: Nucleotide-binding protein Cla_1551 (163 aa).

Belongs to the YajQ family.

Functionally, nucleotide-binding protein. The protein is Nucleotide-binding protein Cla_1551 of Campylobacter lari (strain RM2100 / D67 / ATCC BAA-1060).